We begin with the raw amino-acid sequence, 42 residues long: Large ribosomal subunit protein bL36 (42 aa).

This sequence belongs to the bacterial ribosomal protein bL36 family.

The polypeptide is Large ribosomal subunit protein bL36 (Anaplasma phagocytophilum (strain HZ)).